Consider the following 429-residue polypeptide: Ubiquinone hydroxylase UbiL (429 aa).

The segment at 1 to 22 is disordered; the sequence is MSEPLLRGLAAGDPPSATGPVT.

The protein belongs to the UbiH/COQ6 family. Requires FAD as cofactor.

It carries out the reaction a 2-(all-trans-polyprenyl)phenol + NADPH + O2 + H(+) = a 3-(all-trans-polyprenyl)benzene-1,2-diol + NADP(+) + H2O. Its pathway is cofactor biosynthesis; ubiquinone biosynthesis. Its function is as follows. Catalyzes the hydroxylation of two positions of the aromatic ring during ubiquinone biosynthesis. This is Ubiquinone hydroxylase UbiL from Rhodospirillum rubrum (strain ATCC 11170 / ATH 1.1.1 / DSM 467 / LMG 4362 / NCIMB 8255 / S1).